Consider the following 150-residue polypeptide: uncharacterized protein (150 aa).

The HTH marR-type domain occupies 1 to 133 (MNDILREIGM…ISALLHRVRK (133 aa)). A DNA-binding region (H-T-H motif) is located at residues 47-70 (QEKLAEMIKVDRTTAARAIKKLEM).

This is an uncharacterized protein from Bacillus subtilis (strain 168).